A 416-amino-acid polypeptide reads, in one-letter code: Probable sarcosine oxidase (416 aa).

10–40 serves as a coordination point for FAD; the sequence is DVIVVGAGVMGSSAAYQLAKRGQKTLLLEQF. S-8alpha-FAD cysteine is present on Cys-325.

The protein belongs to the MSOX/MTOX family. It depends on FAD as a cofactor.

It catalyses the reaction sarcosine + O2 + H2O = formaldehyde + glycine + H2O2. The chain is Probable sarcosine oxidase from Arabidopsis thaliana (Mouse-ear cress).